The chain runs to 924 residues: Cell division control protein 13 (924 aa).

The disordered stretch occupies residues 265 to 336 (PTTDISNMGE…KRKRKLSFHS (72 aa)). Residues 295–308 (GKYFSSKSYIQSQT) are compositionally biased toward polar residues. Ser-306 is subject to Phosphoserine. Position 308 is a phosphothreonine (Thr-308). The span at 309–326 (PERKTSVPNNWHDDDSGS) shows a compositional bias: basic and acidic residues. Phosphoserine is present on Ser-333. A DNA-binding region (OB) is located at residues 500 to 686 (KMARKDPTIE…FEEYRRFFPI (187 aa)).

As to quaternary structure, interacts with POL1, EST1, FUN12, STM1, STN1 and TEN1.

It localises to the chromosome. Its subcellular location is the telomere. In terms of biological role, single-stranded telomeric DNA-binding protein that regulates telomere replication. Has a role in both positive and negative regulation. Promotes [TG(1-3)] strand lengthening via interaction with EST1. Promotes [C(1-3)A] strand re-synthesis by DNA polymerase alpha via interaction with POL1. Negatively regulates telomere elongation of the G strand via binding with STN1 thereby inhibiting telomerase activity. The chain is Cell division control protein 13 (CDC13) from Saccharomyces cerevisiae (strain ATCC 204508 / S288c) (Baker's yeast).